A 36-amino-acid chain; its full sequence is Egg-laying hormone (36 aa).

Lys36 is subject to Lysine amide.

The protein belongs to the molluscan ELH family. As to expression, bag cell neurons.

The protein localises to the secreted. ELH acts as a neurotransmitter locally, upon neurons of the abdominal ganglion and as a hormone by diffusing into the circulating hemolymph and modulating the activity of other organs. It specifically causes contraction of smooth muscle in the ovotestis and expulsion of the egg string. The chain is Egg-laying hormone from Aplysia fasciata (Mottled sea hare).